Here is a 269-residue protein sequence, read N- to C-terminus: Energy-coupling factor transporter ATP-binding protein EcfA1 (269 aa).

One can recognise an ABC transporter domain in the interval 8 to 242 (IVFKNVSFQY…AEELTRIGLD (235 aa)). 42–49 (GHNGSGKS) is a binding site for ATP.

Belongs to the ABC transporter superfamily. Energy-coupling factor EcfA family. Forms a stable energy-coupling factor (ECF) transporter complex composed of 2 membrane-embedded substrate-binding proteins (S component), 2 ATP-binding proteins (A component) and 2 transmembrane proteins (T component).

It is found in the cell membrane. In terms of biological role, ATP-binding (A) component of a common energy-coupling factor (ECF) ABC-transporter complex. Unlike classic ABC transporters this ECF transporter provides the energy necessary to transport a number of different substrates. The sequence is that of Energy-coupling factor transporter ATP-binding protein EcfA1 from Staphylococcus aureus (strain Mu50 / ATCC 700699).